We begin with the raw amino-acid sequence, 184 residues long: ATP synthase subunit b, chloroplastic (184 aa).

Residues Leu27–Leu49 traverse the membrane as a helical segment.

This sequence belongs to the ATPase B chain family. As to quaternary structure, F-type ATPases have 2 components, F(1) - the catalytic core - and F(0) - the membrane proton channel. F(1) has five subunits: alpha(3), beta(3), gamma(1), delta(1), epsilon(1). F(0) has four main subunits: a(1), b(1), b'(1) and c(10-14). The alpha and beta chains form an alternating ring which encloses part of the gamma chain. F(1) is attached to F(0) by a central stalk formed by the gamma and epsilon chains, while a peripheral stalk is formed by the delta, b and b' chains.

The protein resides in the plastid. Its subcellular location is the chloroplast thylakoid membrane. Functionally, f(1)F(0) ATP synthase produces ATP from ADP in the presence of a proton or sodium gradient. F-type ATPases consist of two structural domains, F(1) containing the extramembraneous catalytic core and F(0) containing the membrane proton channel, linked together by a central stalk and a peripheral stalk. During catalysis, ATP synthesis in the catalytic domain of F(1) is coupled via a rotary mechanism of the central stalk subunits to proton translocation. Component of the F(0) channel, it forms part of the peripheral stalk, linking F(1) to F(0). The protein is ATP synthase subunit b, chloroplastic of Lobularia maritima (Sweet alyssum).